A 540-amino-acid polypeptide reads, in one-letter code: Zona pellucida sperm-binding protein 4 (540 aa).

An N-terminal signal peptide occupies residues 1–18 (MWLLRCVLLCVSLSLAVS). Topologically, residues 19-505 (GQHKPEAPDY…EKLRVPVDSK (487 aa)) are extracellular. N69 is a glycosylation site (N-linked (GlcNAc...) asparagine). A P-type domain is found at 141 to 183 (DWCDSIPARDRLPCAPSPISRGDCEGLGCCYSSEEVNSCYYGN). The 279-residue stretch at 188–466 (HCTREGHFSI…VTCPDLSRRR (279 aa)) folds into the ZP domain. N-linked (GlcNAc...) asparagine glycans are attached at residues N202, N219, and N267. The O-linked (GalNAc...) threonine glycan is linked to T302. C367 and C442 are joined by a disulfide. Residues 463–540 (SRRRNFDNSS…QKSCPDQMCQ (78 aa)) constitute a propeptide, removed in mature form. 2 N-linked (GlcNAc...) asparagine glycosylation sites follow: N470 and N474. The helical transmembrane segment at 506-526 (VLWVAGLSGTLILGALLVSYL) threads the bilayer. The Cytoplasmic segment spans residues 527–540 (AVKKQKSCPDQMCQ).

Belongs to the ZP domain family. ZPB subfamily. In terms of processing, proteolytically cleaved before the transmembrane segment to yield the secreted ectodomain incorporated in the zona pellucida. In terms of tissue distribution, expressed in oocytes.

The protein resides in the zona pellucida. Its subcellular location is the cell membrane. In terms of biological role, component of the zona pellucida, an extracellular matrix surrounding oocytes which mediates sperm binding, induction of the acrosome reaction and prevents post-fertilization polyspermy. The zona pellucida is composed of 3 to 4 glycoproteins, ZP1, ZP2, ZP3, and ZP4. ZP4 may act as a sperm receptor. This is Zona pellucida sperm-binding protein 4 (ZP4) from Homo sapiens (Human).